A 288-amino-acid polypeptide reads, in one-letter code: Proteasome subunit beta (288 aa).

Positions 1–57 (MTAGDPMRLHPGHALSSFTEHLRALAPELLGPNRFAALDGATGSSGGTGAKDIAPHG) are cleaved as a propeptide — removed in mature form; by autocatalysis. Residue T58 is the Nucleophile of the active site.

This sequence belongs to the peptidase T1B family. As to quaternary structure, the 20S proteasome core is composed of 14 alpha and 14 beta subunits that assemble into four stacked heptameric rings, resulting in a barrel-shaped structure. The two inner rings, each composed of seven catalytic beta subunits, are sandwiched by two outer rings, each composed of seven alpha subunits. The catalytic chamber with the active sites is on the inside of the barrel. Has a gated structure, the ends of the cylinder being occluded by the N-termini of the alpha-subunits. Is capped by the proteasome-associated ATPase, ARC.

It localises to the cytoplasm. The catalysed reaction is Cleavage of peptide bonds with very broad specificity.. Its pathway is protein degradation; proteasomal Pup-dependent pathway. Its activity is regulated as follows. The formation of the proteasomal ATPase ARC-20S proteasome complex, likely via the docking of the C-termini of ARC into the intersubunit pockets in the alpha-rings, may trigger opening of the gate for substrate entry. Interconversion between the open-gate and close-gate conformations leads to a dynamic regulation of the 20S proteasome proteolysis activity. Functionally, component of the proteasome core, a large protease complex with broad specificity involved in protein degradation. This Nocardia farcinica (strain IFM 10152) protein is Proteasome subunit beta.